A 130-amino-acid chain; its full sequence is Small ribosomal subunit protein uS11 (130 aa).

Belongs to the universal ribosomal protein uS11 family. Part of the 30S ribosomal subunit. Interacts with proteins S7 and S18. Binds to IF-3.

Located on the platform of the 30S subunit, it bridges several disparate RNA helices of the 16S rRNA. Forms part of the Shine-Dalgarno cleft in the 70S ribosome. In Microcystis aeruginosa (strain NIES-843 / IAM M-2473), this protein is Small ribosomal subunit protein uS11.